Reading from the N-terminus, the 164-residue chain is Pheromone-binding protein (164 aa).

Residues Met-1–Ala-22 form the signal peptide. Intrachain disulfides connect Cys-41-Cys-76, Cys-72-Cys-130, and Cys-119-Cys-139.

This sequence belongs to the PBP/GOBP family. In terms of assembly, homodimer. As to expression, antenna.

Functionally, this major soluble protein in olfactory sensilla of male moths serves to solubilize the extremely hydrophobic pheromone molecules such as bombykol and to transport pheromone through the aqueous lymph to receptors located on olfactory cilia. The sequence is that of Pheromone-binding protein from Bombyx mori (Silk moth).